Reading from the N-terminus, the 273-residue chain is Acetyl-coenzyme A carboxylase carboxyl transferase subunit alpha (273 aa).

The CoA carboxyltransferase C-terminal domain occupies 1–244 (MKKATQSKAW…KVVLKQALDE (244 aa)).

It belongs to the AccA family. Acetyl-CoA carboxylase is a heterohexamer composed of biotin carboxyl carrier protein (AccB), biotin carboxylase (AccC) and two subunits each of ACCase subunit alpha (AccA) and ACCase subunit beta (AccD).

It localises to the cytoplasm. It catalyses the reaction N(6)-carboxybiotinyl-L-lysyl-[protein] + acetyl-CoA = N(6)-biotinyl-L-lysyl-[protein] + malonyl-CoA. It functions in the pathway lipid metabolism; malonyl-CoA biosynthesis; malonyl-CoA from acetyl-CoA: step 1/1. In terms of biological role, component of the acetyl coenzyme A carboxylase (ACC) complex. First, biotin carboxylase catalyzes the carboxylation of biotin on its carrier protein (BCCP) and then the CO(2) group is transferred by the carboxyltransferase to acetyl-CoA to form malonyl-CoA. This is Acetyl-coenzyme A carboxylase carboxyl transferase subunit alpha from Acinetobacter baumannii (strain ACICU).